The primary structure comprises 63 residues: Large ribosomal subunit protein eL24 (63 aa).

Cysteine 7, cysteine 10, cysteine 33, and cysteine 37 together coordinate Zn(2+). The segment at 7–37 (CSFCGGSIEPGTGLMYVLRNGQILWFCSSKC) adopts a C4-type zinc-finger fold.

Belongs to the eukaryotic ribosomal protein eL24 family. Part of the 50S ribosomal subunit. Forms a cluster with proteins L3 and L14. Zn(2+) is required as a cofactor.

Functionally, binds to the 23S rRNA. The polypeptide is Large ribosomal subunit protein eL24 (Aeropyrum pernix (strain ATCC 700893 / DSM 11879 / JCM 9820 / NBRC 100138 / K1)).